Here is a 285-residue protein sequence, read N- to C-terminus: Energy-coupling factor transporter ATP-binding protein EcfA2 (285 aa).

Residues 3–245 (IKFKKVDYIY…RKWLKKHNLS (243 aa)) enclose the ABC transporter domain. An ATP-binding site is contributed by 40 to 47 (GHTGSGKS).

This sequence belongs to the ABC transporter superfamily. Energy-coupling factor EcfA family. As to quaternary structure, forms a stable energy-coupling factor (ECF) transporter complex composed of 2 membrane-embedded substrate-binding proteins (S component), 2 ATP-binding proteins (A component) and 2 transmembrane proteins (T component).

It localises to the cell membrane. Its function is as follows. ATP-binding (A) component of a common energy-coupling factor (ECF) ABC-transporter complex. Unlike classic ABC transporters this ECF transporter provides the energy necessary to transport a number of different substrates. This chain is Energy-coupling factor transporter ATP-binding protein EcfA2, found in Lactobacillus acidophilus (strain ATCC 700396 / NCK56 / N2 / NCFM).